The following is a 321-amino-acid chain: Cytochrome f (321 aa).

The N-terminal stretch at 1–35 (MQNRNKNNWMKKWVIRSISILIILNIIAWPSISYA) is a signal peptide. Heme-binding residues include Tyr36, Cys56, Cys59, and His60. The chain crosses the membrane as a helical span at residues 287-306 (IQGLLLFFVSVIMAQILLVL).

This sequence belongs to the cytochrome f family. In terms of assembly, the 4 large subunits of the cytochrome b6-f complex are cytochrome b6, subunit IV (17 kDa polypeptide, petD), cytochrome f and the Rieske protein, while the 4 small subunits are PetG, PetL, PetM and PetN. The complex functions as a dimer. The cofactor is heme.

It is found in the plastid. The protein resides in the chloroplast thylakoid membrane. Functionally, component of the cytochrome b6-f complex, which mediates electron transfer between photosystem II (PSII) and photosystem I (PSI), cyclic electron flow around PSI, and state transitions. The chain is Cytochrome f from Psilotum nudum (Whisk fern).